The following is a 358-amino-acid chain: 4-diphosphocytidyl-2-C-methyl-D-erythritol kinase (358 aa).

K24 is a catalytic residue. 138-148 (PVAGGMAGGSA) lines the ATP pocket. D186 is a catalytic residue.

This sequence belongs to the GHMP kinase family. IspE subfamily.

It carries out the reaction 4-CDP-2-C-methyl-D-erythritol + ATP = 4-CDP-2-C-methyl-D-erythritol 2-phosphate + ADP + H(+). The protein operates within isoprenoid biosynthesis; isopentenyl diphosphate biosynthesis via DXP pathway; isopentenyl diphosphate from 1-deoxy-D-xylulose 5-phosphate: step 3/6. In terms of biological role, catalyzes the phosphorylation of the position 2 hydroxy group of 4-diphosphocytidyl-2C-methyl-D-erythritol. The chain is 4-diphosphocytidyl-2-C-methyl-D-erythritol kinase from Corynebacterium jeikeium (strain K411).